Reading from the N-terminus, the 215-residue chain is Ribose-5-phosphate isomerase A (215 aa).

Substrate contacts are provided by residues Thr-26 to Thr-29, Asp-79 to Asp-82, and Lys-92 to Gly-95. Glu-101 serves as the catalytic Proton acceptor. Residue Lys-119 coordinates substrate.

This sequence belongs to the ribose 5-phosphate isomerase family. As to quaternary structure, homodimer.

It carries out the reaction aldehydo-D-ribose 5-phosphate = D-ribulose 5-phosphate. The protein operates within carbohydrate degradation; pentose phosphate pathway; D-ribose 5-phosphate from D-ribulose 5-phosphate (non-oxidative stage): step 1/1. Catalyzes the reversible conversion of ribose-5-phosphate to ribulose 5-phosphate. The sequence is that of Ribose-5-phosphate isomerase A from Xanthomonas euvesicatoria pv. vesicatoria (strain 85-10) (Xanthomonas campestris pv. vesicatoria).